Reading from the N-terminus, the 1485-residue chain is Chromosome partition protein MukB (1485 aa).

34–41 (GGNGAGKS) provides a ligand contact to ATP. Coiled-coil stretches lie at residues 337–480 (LNLV…QAYQ), 509–605 (QHLA…PVWL), 780–805 (RAAR…ATLS), 835–915 (EAEI…IQQH), 977–1116 (GMLT…AKAG), and 1210–1235 (EAIE…KLAI). A flexible hinge region spans residues 666–783 (PSGAEDARLI…EVPLFGRAAR (118 aa)).

The protein belongs to the SMC family. MukB subfamily. Homodimerization via its hinge domain. Binds to DNA via its C-terminal region. Interacts, and probably forms a ternary complex, with MukE and MukF via its C-terminal region. The complex formation is stimulated by calcium or magnesium. Interacts with tubulin-related protein FtsZ.

It localises to the cytoplasm. The protein localises to the nucleoid. In terms of biological role, plays a central role in chromosome condensation, segregation and cell cycle progression. Functions as a homodimer, which is essential for chromosome partition. Involved in negative DNA supercoiling in vivo, and by this means organize and compact chromosomes. May achieve or facilitate chromosome segregation by condensation DNA from both sides of a centrally located replisome during cell division. The chain is Chromosome partition protein MukB from Yersinia pseudotuberculosis serotype O:1b (strain IP 31758).